The following is a 150-amino-acid chain: Major facilitator superfamily domain-containing 14C pseudogene (150 aa).

The interval methionine 1–lysine 25 is disordered. The Extracellular portion of the chain corresponds to methionine 1 to alanine 49. A helical membrane pass occupies residues isoleucine 50–leucine 70. The Cytoplasmic portion of the chain corresponds to histidine 71–asparagine 82. Residues glycine 83–leucine 103 traverse the membrane as a helical segment. Residues serine 104–proline 111 are Extracellular-facing. The helical transmembrane segment at phenylalanine 112 to cysteine 132 threads the bilayer. Residues arginine 133–alanine 150 are Cytoplasmic-facing.

It belongs to the major facilitator superfamily.

The protein resides in the membrane. The polypeptide is Major facilitator superfamily domain-containing 14C pseudogene (Homo sapiens (Human)).